The sequence spans 280 residues: MTLLQALILAIVQGITEPFPVSSLGHAVLLPALLHWDLDEHAPMFLPFLTMLHVGTLVALAGVFWRDWMAILGGMFGRYGSYRQMEAIRIFGLLVIATIPAVLVGWLLEHRLRAVFGTPLAVAGFLILNGFLLMVTEWLRRQKGHRDHKPIATLAPKDAVIIGIWQCLALLPGLSRSGATMNGGLLRGLDHETAARFSLLMAQPIVLAATVREAWQMRHMTISHDIMVQCVAGAVVAGLTALICSLVMLRFFRNHDGWALTPFGVYCVLAGLFAGAVILL.

7 helical membrane-spanning segments follow: residues Met1–Val21, Phe45–Trp65, Ile90–His110, Val115–Val135, Ile151–Leu171, Ile226–Leu246, and Leu260–Leu280.

It belongs to the UppP family.

The protein resides in the cell inner membrane. It catalyses the reaction di-trans,octa-cis-undecaprenyl diphosphate + H2O = di-trans,octa-cis-undecaprenyl phosphate + phosphate + H(+). Functionally, catalyzes the dephosphorylation of undecaprenyl diphosphate (UPP). Confers resistance to bacitracin. The sequence is that of Undecaprenyl-diphosphatase from Gluconobacter oxydans (strain 621H) (Gluconobacter suboxydans).